Consider the following 250-residue polypeptide: Histone H1.3 (250 aa).

2 disordered regions span residues 17-53 and 104-250; these read AASGEKKVSTKKAAATPKSKKSTAAPPSHPPTQQMVD and QTKG…ATKK. The span at 27–42 shows a compositional bias: low complexity; the sequence is KKAAATPKSKKSTAAP. The H15 domain occupies 44–118; that stretch reads SHPPTQQMVD…GASGSFKLSR (75 aa). Residues 120–133 are compositionally biased toward basic and acidic residues; it reads AKKDAKPKASAVEK. Residues 138–161 show a composition bias toward low complexity; sequence VNASAAAATKRSSSTSTTKKAAGA. Positions 174–191 are enriched in basic and acidic residues; sequence KNVEKKKADKEKAKDAKK. A compositionally biased stretch (low complexity) spans 192–234; sequence TGTIKAKLTTAKAKSSATKPKTPKPKTTSAKPKKVVSATTPKK. The segment covering 235-250 has biased composition (basic residues); sequence TAVKKPKAKTASATKK.

It belongs to the histone H1/H5 family.

The protein localises to the nucleus. It is found in the chromosome. Histones H1 are necessary for the condensation of nucleosome chains into higher-order structures. This is Histone H1.3 (His1.3) from Drosophila virilis (Fruit fly).